The primary structure comprises 421 residues: Gamma-glutamyl phosphate reductase (421 aa).

Belongs to the gamma-glutamyl phosphate reductase family.

It is found in the cytoplasm. The catalysed reaction is L-glutamate 5-semialdehyde + phosphate + NADP(+) = L-glutamyl 5-phosphate + NADPH + H(+). It functions in the pathway amino-acid biosynthesis; L-proline biosynthesis; L-glutamate 5-semialdehyde from L-glutamate: step 2/2. Its function is as follows. Catalyzes the NADPH-dependent reduction of L-glutamate 5-phosphate into L-glutamate 5-semialdehyde and phosphate. The product spontaneously undergoes cyclization to form 1-pyrroline-5-carboxylate. This is Gamma-glutamyl phosphate reductase from Acinetobacter baumannii (strain ATCC 17978 / DSM 105126 / CIP 53.77 / LMG 1025 / NCDC KC755 / 5377).